The chain runs to 810 residues: DNA gyrase subunit A (810 aa).

The Topo IIA-type catalytic domain occupies 36 to 502; the sequence is LPDVRDGLKP…EVLKTSMSDL (467 aa). Tyrosine 124 serves as the catalytic O-(5'-phospho-DNA)-tyrosine intermediate. The short motif at 529-535 is the GyrA-box element; it reads QGIGGKG.

It belongs to the type II topoisomerase GyrA/ParC subunit family. Heterotetramer, composed of two GyrA and two GyrB chains. In the heterotetramer, GyrA contains the active site tyrosine that forms a transient covalent intermediate with DNA, while GyrB binds cofactors and catalyzes ATP hydrolysis.

It is found in the cytoplasm. It carries out the reaction ATP-dependent breakage, passage and rejoining of double-stranded DNA.. Its function is as follows. A type II topoisomerase that negatively supercoils closed circular double-stranded (ds) DNA in an ATP-dependent manner to modulate DNA topology and maintain chromosomes in an underwound state. Negative supercoiling favors strand separation, and DNA replication, transcription, recombination and repair, all of which involve strand separation. Also able to catalyze the interconversion of other topological isomers of dsDNA rings, including catenanes and knotted rings. Type II topoisomerases break and join 2 DNA strands simultaneously in an ATP-dependent manner. The chain is DNA gyrase subunit A from Borrelia hermsii (strain HS1 / DAH).